The sequence spans 355 residues: MAGFNIKHWFADGAFRTIIRNSAWLGSSNVVSALLGLLALSCAGKGMTPAMFGVLVIVQSYAKSISDFIKFQTWQLVVQYGTPALTNNNPQQFRNVVSFSFSLDIVSGAVAIVGGIALLPFLSHSLGLDDQSFWLAALYCTLIPSMASSTPTGILRAVDRFDLIAVQQATKPFLRAAGSVVAWYFDFGFAGFVIAWYVSNLVGGTMYWWFAARELRRRNIHNAFKLNLFESARYIKGAWSFVWSTNIAHSIWSARNSCSTVLVGIVLGPAAAGLFKIAMTFFDAAGTPAGLLGKSFYPEVMRLDPRTTRPWLLGVKSGLLAGGIGILVALAVLIVGKPLISLVFGVKYLEAYDLI.

Topologically, residues Met1 to Leu37 are periplasmic. The chain crosses the membrane as a helical span at residues Leu38–Val58. At Gln59 to Ser100 the chain is on the cytoplasmic side. Residues Phe101 to Phe121 traverse the membrane as a helical segment. Over Leu122–Trp134 the chain is Periplasmic. A helical transmembrane segment spans residues Leu135–Leu155. Residues Arg156 to Ala177 lie on the Cytoplasmic side of the membrane. A helical transmembrane segment spans residues Gly178–Val198. Over Ser199–Val261 the chain is Periplasmic. A helical membrane pass occupies residues Leu262–Phe282. At Asp283–Gly323 the chain is on the cytoplasmic side. The chain crosses the membrane as a helical span at residues Ile324–Phe344. The Periplasmic portion of the chain corresponds to Gly345–Ile355.

Its subcellular location is the cell inner membrane. The sequence is that of Inner membrane protein YghQ (yghQ) from Escherichia coli (strain K12).